The following is a 234-amino-acid chain: UPF0502 protein Reut_B4455 (234 aa).

Belongs to the UPF0502 family.

This chain is UPF0502 protein Reut_B4455, found in Cupriavidus pinatubonensis (strain JMP 134 / LMG 1197) (Cupriavidus necator (strain JMP 134)).